We begin with the raw amino-acid sequence, 84 residues long: Small ribosomal subunit protein uS17 (84 aa).

This sequence belongs to the universal ribosomal protein uS17 family. In terms of assembly, part of the 30S ribosomal subunit.

Functionally, one of the primary rRNA binding proteins, it binds specifically to the 5'-end of 16S ribosomal RNA. In Salmonella typhi, this protein is Small ribosomal subunit protein uS17.